Here is a 1367-residue protein sequence, read N- to C-terminus: Dynactin, 150 kDa isoform (1367 aa).

The region spanning 28-70 is the CAP-Gly domain; sequence GETAFAPGTWVGIELDEPSGKNDGSVQGERYFNCEMGYGMFVR. Residues 76–318 are disordered; the sequence is VIAQPPPPPP…NLKATTITPR (243 aa). 2 stretches are compositionally biased toward low complexity: residues 88-99 and 132-149; these read TFRRSVTTRPTS and PSRTSSTSITRSPTRSPT. The span at 150-163 shows a compositional bias: polar residues; the sequence is KQLATASSSGNPSR. Low complexity-rich tracts occupy residues 164–190 and 243–259; these read SGTPSTTTKPAGPTTRTRPSLSTSRHS and STGSVSSVGKSGFKRGS. Coiled coils occupy residues 321 to 598, 637 to 698, and 1039 to 1199; these read ITNT…MQEE, LQSD…EAEQ, and AELK…RARL.

It belongs to the dynactin 150 kDa subunit family. Large macromolecular complex of at least 10 components; p150(glued) binds directly to microtubules and to cytoplasmic dynein.

Its subcellular location is the cytoplasm. It is found in the cytoskeleton. Its function is as follows. Required for the cytoplasmic dynein-driven retrograde movement of vesicles and organelles along microtubules. Dynein-dynactin interaction is a key component of the mechanism of axonal transport of vesicles and organelles. The sequence is that of Dynactin, 150 kDa isoform (ro-3) from Neurospora crassa (strain ATCC 24698 / 74-OR23-1A / CBS 708.71 / DSM 1257 / FGSC 987).